The chain runs to 557 residues: CTP synthase (557 aa).

Residues 1-272 (MARSKIVKHI…DSLVLKKLML (272 aa)) are amidoligase domain. Ser-18 serves as a coordination point for CTP. Ser-18 contributes to the UTP binding site. 19–24 (SLGKGI) is a binding site for ATP. Residue Tyr-59 coordinates L-glutamine. ATP is bound at residue Asp-76. Mg(2+) is bound by residues Asp-76 and Glu-146. Residues 153–155 (DIE), 193–198 (KTKPTQ), and Lys-229 each bind CTP. Residues 193–198 (KTKPTQ) and Lys-229 each bind UTP. The region spanning 299–543 (EIGVCGKYTK…VAEAKKFRDE (245 aa)) is the Glutamine amidotransferase type-1 domain. Gly-363 provides a ligand contact to L-glutamine. Cys-390 serves as the catalytic Nucleophile; for glutamine hydrolysis. Residues 391–394 (LGMQ), Glu-414, and Arg-471 contribute to the L-glutamine site. Residues His-516 and Glu-518 contribute to the active site.

The protein belongs to the CTP synthase family. In terms of assembly, homotetramer.

It catalyses the reaction UTP + L-glutamine + ATP + H2O = CTP + L-glutamate + ADP + phosphate + 2 H(+). The enzyme catalyses L-glutamine + H2O = L-glutamate + NH4(+). It carries out the reaction UTP + NH4(+) + ATP = CTP + ADP + phosphate + 2 H(+). It participates in pyrimidine metabolism; CTP biosynthesis via de novo pathway; CTP from UDP: step 2/2. Its activity is regulated as follows. Allosterically activated by GTP, when glutamine is the substrate; GTP has no effect on the reaction when ammonia is the substrate. The allosteric effector GTP functions by stabilizing the protein conformation that binds the tetrahedral intermediate(s) formed during glutamine hydrolysis. Inhibited by the product CTP, via allosteric rather than competitive inhibition. Catalyzes the ATP-dependent amination of UTP to CTP with either L-glutamine or ammonia as the source of nitrogen. Regulates intracellular CTP levels through interactions with the four ribonucleotide triphosphates. In Chloroherpeton thalassium (strain ATCC 35110 / GB-78), this protein is CTP synthase.